A 106-amino-acid polypeptide reads, in one-letter code: RxLR effector protein PSR1 (106 aa).

The N-terminal stretch at 1–20 (MRLTYVLLVAVTTLLVSCDA) is a signal peptide. Positions 33 to 46 (RLLRFVEAADEEER) match the RxLR-dEER motif. A WY domain region spans residues 50 to 106 (FSPEKLRKMLGDETYRLKKFGKWDSDGHTFDGLKHYLLLSDSSMVKLRNMYKAWLEQ). The short motif at 56–69 (RKMLGDETYRLKKF) is the Bipartite nuclear localization signal (NLS) element.

Belongs to the RxLR effector family. Interacts with host PINP1.

It localises to the secreted. The protein localises to the host nucleus. Secreted effector that possesses RNA silencing suppression activity by inhibiting the biogenesis of small RNAs in the host plant to promote enhanced susceptibility of host to the pathogen during infection. Interferes with secondary siRNA production by associating with host nuclear protein PINP1 that acts as a regulator of the accumulation of both microRNAs and endogenous small interfering RNAs. The polypeptide is RxLR effector protein PSR1 (Phytophthora sojae (Soybean stem and root rot agent)).